Consider the following 371-residue polypeptide: Histidinol-phosphate aminotransferase 2 (371 aa).

At lysine 232 the chain carries N6-(pyridoxal phosphate)lysine.

This sequence belongs to the class-II pyridoxal-phosphate-dependent aminotransferase family. Histidinol-phosphate aminotransferase subfamily. As to quaternary structure, homodimer. Pyridoxal 5'-phosphate is required as a cofactor.

The catalysed reaction is L-histidinol phosphate + 2-oxoglutarate = 3-(imidazol-4-yl)-2-oxopropyl phosphate + L-glutamate. The protein operates within amino-acid biosynthesis; L-histidine biosynthesis; L-histidine from 5-phospho-alpha-D-ribose 1-diphosphate: step 7/9. In Methylococcus capsulatus (strain ATCC 33009 / NCIMB 11132 / Bath), this protein is Histidinol-phosphate aminotransferase 2.